Reading from the N-terminus, the 499-residue chain is Probable cytosol aminopeptidase (499 aa).

Residues Lys268 and Asp273 each contribute to the Mn(2+) site. The active site involves Lys280. Asp291, Asp350, and Glu352 together coordinate Mn(2+). Arg354 is an active-site residue.

Belongs to the peptidase M17 family. Mn(2+) is required as a cofactor.

The protein resides in the cytoplasm. The catalysed reaction is Release of an N-terminal amino acid, Xaa-|-Yaa-, in which Xaa is preferably Leu, but may be other amino acids including Pro although not Arg or Lys, and Yaa may be Pro. Amino acid amides and methyl esters are also readily hydrolyzed, but rates on arylamides are exceedingly low.. It catalyses the reaction Release of an N-terminal amino acid, preferentially leucine, but not glutamic or aspartic acids.. Functionally, presumably involved in the processing and regular turnover of intracellular proteins. Catalyzes the removal of unsubstituted N-terminal amino acids from various peptides. The protein is Probable cytosol aminopeptidase of Halorhodospira halophila (strain DSM 244 / SL1) (Ectothiorhodospira halophila (strain DSM 244 / SL1)).